A 186-amino-acid polypeptide reads, in one-letter code: Probable RNA 2'-phosphotransferase (186 aa).

Belongs to the KptA/TPT1 family.

Removes the 2'-phosphate from RNA via an intermediate in which the phosphate is ADP-ribosylated by NAD followed by a presumed transesterification to release the RNA and generate ADP-ribose 1''-2''-cyclic phosphate (APPR&gt;P). May function as an ADP-ribosylase. This Pectobacterium carotovorum subsp. carotovorum (strain PC1) protein is Probable RNA 2'-phosphotransferase.